A 341-amino-acid chain; its full sequence is Diguanylate cyclase DgcP (341 aa).

A GAF domain is found at 18–154 (SLESLVRQLL…LFAGLIAQYI (137 aa)). One can recognise a GGDEF domain in the interval 204 to 337 (HKIMIAFIDL…KQKTPFVAHP (134 aa)). Asp212 contributes to the Mg(2+) binding site. The substrate site is built by Asn220, His225, and Asp229. A Mg(2+)-binding site is contributed by Asp255. The active-site Proton acceptor is the Asp255.

As to quaternary structure, homodimer. The cofactor is Mg(2+).

The catalysed reaction is 2 GTP = 3',3'-c-di-GMP + 2 diphosphate. Its pathway is purine metabolism; 3',5'-cyclic di-GMP biosynthesis. Its function is as follows. Catalyzes the synthesis of cyclic-di-GMP (c-di-GMP) via the condensation of 2 GTP molecules. Cyclic-di-GMP is a second messenger which controls cell surface-associated traits in bacteria. This is Diguanylate cyclase DgcP from Escherichia coli (strain K12).